The following is a 654-amino-acid chain: Translation factor GUF1, mitochondrial (654 aa).

One can recognise a tr-type G domain in the interval 57–237 (ENYRNFSIVA…SVIKNIPSPV (181 aa)). GTP is bound by residues 66–73 (AHVDHGKS), 130–134 (DTPGH), and 184–187 (NKID).

Belongs to the TRAFAC class translation factor GTPase superfamily. Classic translation factor GTPase family. LepA subfamily.

The protein localises to the mitochondrion inner membrane. The enzyme catalyses GTP + H2O = GDP + phosphate + H(+). Functionally, promotes mitochondrial protein synthesis. May act as a fidelity factor of the translation reaction, by catalyzing a one-codon backward translocation of tRNAs on improperly translocated ribosomes. Binds to mitochondrial ribosomes in a GTP-dependent manner. The protein is Translation factor GUF1, mitochondrial of Candida dubliniensis (strain CD36 / ATCC MYA-646 / CBS 7987 / NCPF 3949 / NRRL Y-17841) (Yeast).